The following is a 1822-amino-acid chain: ADP-ribosylation factor guanine nucleotide-exchange factor sec72 (1822 aa).

Disordered stretches follow at residues 1–54 and 66–126; these read MQDA…NGMD and DAVV…RASL. At S44 the chain carries Phosphoserine. Over residues 72–84 the composition is skewed to polar residues; that stretch reads DINTEDSSLSPAK. Basic and acidic residues predominate over residues 85–110; it reads QENEKSPEGIEQKYQEEDLKDDKKSN. Phosphoserine is present on residues S122 and S125. The HUS box motif lies at 547 to 551; it reads NYDCD. T597 is subject to Phosphothreonine. S653 bears the Phosphoserine mark. T654 carries the phosphothreonine modification. Position 669 is a phosphoserine (S669). The SEC7 domain maps to 701–889; that stretch reads QFESNKQRKK…GFVYDDILKN (189 aa). An HDS1 domain region spans residues 898-1106; sequence ELAAIAPLMN…NARVRRKNVN (209 aa). S1110 bears the Phosphoserine mark. 2 disordered regions span residues 1111-1131 and 1584-1610; these read NSIR…SLSK and ENEN…TSSI. Low complexity-rich tracts occupy residues 1117–1130 and 1597–1610; these read SGST…RSLS and SLPE…TSSI. 2 positions are modified to phosphoserine: S1606 and S1609.

The protein localises to the cytoplasm. Its subcellular location is the golgi apparatus. The protein resides in the trans-Golgi network. It is found in the cytoplasmic vesicle. It localises to the COPI-coated vesicle membrane. The protein localises to the COPII-coated vesicle membrane. Its function is as follows. Guanine exchange factor that acts as an activator of arf1 at the trans-Golgi net-work and is thus involved in vesicular budding and traffic between compartments of the Golgi apparatus. Activation of Arf (ADP-ribosylation factor) GTPases is essential for vesicle formation via recruitment of cargo adapters and coat proteins necessary for Golgi trafficking. Involved in the resistance to tamoxifen (TAM), an anticancer drug used to treat estrogen receptor (ER)-positive breast cancer. The protein is ADP-ribosylation factor guanine nucleotide-exchange factor sec72 of Schizosaccharomyces pombe (strain 972 / ATCC 24843) (Fission yeast).